The sequence spans 212 residues: Pyridoxine/pyridoxamine 5'-phosphate oxidase (212 aa).

Substrate-binding positions include 7–10 (RAKY) and K65. FMN is bound by residues 60–65 (RTVLLK), 75–76 (FT), K82, and Q104. Substrate-binding residues include Y122, R126, and S130. FMN contacts are provided by residues 139–140 (QS) and W184. 190–192 (RLH) is a binding site for substrate. R194 contacts FMN.

It belongs to the pyridoxamine 5'-phosphate oxidase family. As to quaternary structure, homodimer. The cofactor is FMN.

The enzyme catalyses pyridoxamine 5'-phosphate + O2 + H2O = pyridoxal 5'-phosphate + H2O2 + NH4(+). It carries out the reaction pyridoxine 5'-phosphate + O2 = pyridoxal 5'-phosphate + H2O2. The protein operates within cofactor metabolism; pyridoxal 5'-phosphate salvage; pyridoxal 5'-phosphate from pyridoxamine 5'-phosphate: step 1/1. It participates in cofactor metabolism; pyridoxal 5'-phosphate salvage; pyridoxal 5'-phosphate from pyridoxine 5'-phosphate: step 1/1. Functionally, catalyzes the oxidation of either pyridoxine 5'-phosphate (PNP) or pyridoxamine 5'-phosphate (PMP) into pyridoxal 5'-phosphate (PLP). The chain is Pyridoxine/pyridoxamine 5'-phosphate oxidase from Aliarcobacter butzleri (strain RM4018) (Arcobacter butzleri).